We begin with the raw amino-acid sequence, 228 residues long: Ribulose-phosphate 3-epimerase, cytoplasmic isoform (228 aa).

S12 contributes to the substrate binding site. The a divalent metal cation site is built by H37, D39, and H70. D39 serves as the catalytic Proton acceptor. Substrate is bound by residues H70, 150-153 (GFGG), 179-181 (DGG), and 201-202 (GS). Position 179 (D179) interacts with a divalent metal cation. The Proton donor role is filled by D179.

The protein belongs to the ribulose-phosphate 3-epimerase family. Homodimer. Co(2+) is required as a cofactor. Fe(2+) serves as cofactor. The cofactor is Mn(2+). Requires Zn(2+) as cofactor. Predominantly accumulates in roots and seedlings.

The protein resides in the cytoplasm. It catalyses the reaction D-ribulose 5-phosphate = D-xylulose 5-phosphate. The protein operates within carbohydrate degradation; pentose phosphate pathway; D-xylulose 5-phosphate from D-ribulose 5-phosphate (non-oxidative stage): step 1/1. Functionally, catalyzes the reversible epimerization of D-ribulose 5-phosphate to D-xylulose 5-phosphate. In Oryza sativa subsp. japonica (Rice), this protein is Ribulose-phosphate 3-epimerase, cytoplasmic isoform.